A 415-amino-acid polypeptide reads, in one-letter code: Corticotropin-releasing factor receptor 1 (415 aa).

An N-terminal signal peptide occupies residues 1–23 (MARHPQLRLVKALLLLGLNPVSA). At 24 to 111 (SLQDQHCESL…CQEILNEEKK (88 aa)) the chain is on the extracellular side. 3 disulfides stabilise this stretch: Cys30–Cys54, Cys44–Cys87, and Cys68–Cys102. 3 N-linked (GlcNAc...) asparagine glycosylation sites follow: Asn38, Asn78, and Asn98. An important for peptide agonist binding region spans residues 99 to 108 (YSECQEILNE). A helical transmembrane segment spans residues 112–142 (SKVHYHVAVIINYLGHCISLVALLVAFVLFL). Over 143–149 (RLRSIRC) the chain is Cytoplasmic. Residues 150 to 174 (LRNIIHWNLISAFILRNATWFVVQL) form a helical membrane-spanning segment. The Extracellular portion of the chain corresponds to 175-189 (TMSPEVHQSNVGWCR). A disulfide bond links Cys188 and Cys258. Residues 190-218 (LVTAAYNYFHVTNFFWMFGEGCYLHTAIV) form a helical membrane-spanning segment. At 219–225 (LTYSTDR) the chain is on the cytoplasmic side. A helical transmembrane segment spans residues 226–253 (LRKWMFICIGWGVPFPIIVAWAIGKLYY). Over 254 to 269 (DNEKCWFGKRPGVYTD) the chain is Extracellular. Residues 270–295 (YIYQGPMILVLLINFIFLFNIVRILM) traverse the membrane as a helical segment. Residues 280–290 (LLINFIFLFNI) are important for antagonist binding. The Cytoplasmic portion of the chain corresponds to 296 to 306 (TKLRASTTSET). Ser301 carries the phosphoserine; by PKA modification. Residues 307–331 (IQYRKAVKATLVLLPLLGITYMLFF) form a helical membrane-spanning segment. Topologically, residues 332 to 338 (VNPGEDE) are extracellular. The chain crosses the membrane as a helical span at residues 339-368 (VSRVVFIYFNSFLESFQGFFVSVFYCFLNS). Topologically, residues 369 to 415 (EVRSAIRKRWHRWQDKHSIRARVARAMSIPTSPTRVSFHSIKQSTAV) are cytoplasmic.

It belongs to the G-protein coupled receptor 2 family. As to quaternary structure, heterodimer; heterodimerizes with GPER1. Interacts (via N-terminal extracellular domain) with CRH and UCN. Interacts with DLG1; this inhibits endocytosis of CRHR1 after agonist binding. In terms of processing, C-terminal Ser or Thr residues may be phosphorylated. Post-translationally, phosphorylation at Ser-301 by PKA prevents maximal coupling to Gq-protein, and thereby negatively regulates downstream signaling. As to expression, expressed abundantly in the pituitary, cerebral cortex, hippocampus, amygdala and cerebellum.

The protein resides in the cell membrane. It is found in the endosome. Functionally, G-protein coupled receptor for CRH (corticotropin-releasing factor) and UCN (urocortin). Has high affinity for CRH and UCN. Ligand binding causes a conformation change that triggers signaling via guanine nucleotide-binding proteins (G proteins) and down-stream effectors, such as adenylate cyclase. Promotes the activation of adenylate cyclase, leading to increased intracellular cAMP levels. Inhibits the activity of the calcium channel CACNA1H. Required for normal embryonic development of the adrenal gland and for normal hormonal responses to stress. Plays a role in the response to anxiogenic stimuli. In Macaca mulatta (Rhesus macaque), this protein is Corticotropin-releasing factor receptor 1 (CRHR1).